Consider the following 135-residue polypeptide: Lymphocyte antigen 6B (135 aa).

The first 26 residues, 1 to 26, serve as a signal peptide directing secretion; sequence MNRSCAMKSCVLILLLALLCAERAQG. The UPAR/Ly6 domain occupies 27 to 119; sequence LNCYNCTMIP…PTGGSTWTMA (93 aa). 5 cysteine pairs are disulfide-bonded: Cys-29–Cys-54, Cys-32–Cys-41, Cys-47–Cys-75, Cys-79–Cys-99, and Cys-100–Cys-105. Gly-113 carries GPI-anchor amidated glycine lipidation. The propeptide at 114–135 is removed in mature form; the sequence is STWTMAGVLLFILGSVLLQTLL.

The protein resides in the cell membrane. In Rattus norvegicus (Rat), this protein is Lymphocyte antigen 6B (Ly6b).